The primary structure comprises 157 residues: Transcription elongation factor GreA (157 aa).

It belongs to the GreA/GreB family.

Its function is as follows. Necessary for efficient RNA polymerase transcription elongation past template-encoded arresting sites. The arresting sites in DNA have the property of trapping a certain fraction of elongating RNA polymerases that pass through, resulting in locked ternary complexes. Cleavage of the nascent transcript by cleavage factors such as GreA or GreB allows the resumption of elongation from the new 3'terminus. GreA releases sequences of 2 to 3 nucleotides. This is Transcription elongation factor GreA from Caulobacter vibrioides (strain ATCC 19089 / CIP 103742 / CB 15) (Caulobacter crescentus).